We begin with the raw amino-acid sequence, 205 residues long: Small ribosomal subunit protein mS26 (205 aa).

A mitochondrion-targeting transit peptide spans 1 to 27 (MLRALSRLGAGTPCRPRAPLVLPARGR).

It belongs to the mitochondrion-specific ribosomal protein mS26 family. As to quaternary structure, component of the mitochondrial small ribosomal subunit (mt-SSU). Mature mammalian 55S mitochondrial ribosomes consist of a small (28S) and a large (39S) subunit. The 28S small subunit contains a 12S ribosomal RNA (12S mt-rRNA) and 30 different proteins. The 39S large subunit contains a 16S rRNA (16S mt-rRNA), a copy of mitochondrial valine transfer RNA (mt-tRNA(Val)), which plays an integral structural role, and 52 different proteins.

Its subcellular location is the mitochondrion. The sequence is that of Small ribosomal subunit protein mS26 (MRPS26) from Homo sapiens (Human).